Reading from the N-terminus, the 538-residue chain is Syncytin-2 (538 aa).

An N-terminal signal peptide occupies residues 1–15; sequence MGLLLLVLILTPLLA. The Extracellular portion of the chain corresponds to 31-478; it reads LLQSTGSPYS…GWLNWEGTWK (448 aa). Residues 43-46 carry the CXXC motif; that stretch reads CWLC. Cystine bridges form between Cys43–Cys46, Cys43–Cys439, and Cys431–Cys438. N-linked (GlcNAc...) asparagine glycosylation is found at Asn133, Asn146, Asn177, Asn220, Asn241, Asn247, Asn312, and Asn332. The fusion peptide stretch occupies residues 354-374; it reads FIPLLAGLGILAGTGTGIAGI. A CKS-17 motif is present at residues 414–430; the sequence is LQNRRGLDMLTAAQGGI. Positions 431 to 439 match the CX6CC motif; it reads CLALDEKCC. Asn443 carries N-linked (GlcNAc...) asparagine glycosylation. A helical transmembrane segment spans residues 479–499; the sequence is WFSWVLPFIGPFVSLLLLLLF. Residues 500–538 lie on the Cytoplasmic side of the membrane; the sequence is GPCLLNLITQFVSSRLQAIKLQTNLSAGRRPRTIQESPF.

This sequence belongs to the gamma type-C retroviral envelope protein family. HERV class-I FRD env subfamily. In terms of assembly, the surface and transmembrane proteins form a heterodimer. They are attached by non-covalent interactions or by a labile interchain disulfide bond. Post-translationally, specific enzymatic cleavages in vivo yield the mature SU and TM proteins. The CXXC motif is highly conserved across a broad range of retroviral envelope proteins. It is thought to participate in the formation of a labile disulfide bond possibly with the CX6CC motif present in the transmembrane protein.

The protein resides in the cell membrane. Its function is as follows. This endogenous retroviral envelope protein has retained its original fusogenic properties and participates in trophoblast fusion and the formation of a syncytium during placenta morphogenesis. The interaction with MFSD2A is apparently important for this process. Endogenous envelope proteins may have kept, lost or modified their original function during evolution and this one is unable to confer infectivity. This is Syncytin-2 (ERVFRD-1) from Hylobates moloch (Silvery gibbon).